The primary structure comprises 223 residues: Mating-type protein ALPHA2 (223 aa).

The homeobox; TALE-type DNA-binding region spans 151 to 213; that stretch reads EFKKGKRFLK…NRRRKDKITE (63 aa).

This sequence belongs to the TALE/M-ATYP homeobox family. Forms a heterodimer with A1.

Its subcellular location is the nucleus. Its function is as follows. Mating type proteins are sequence specific DNA-binding proteins that act as master switches in yeast differentiation by controlling gene expression in a cell type-specific fashion. Transcriptional corepressor that acts in conjunction with A1 to repress transcription of haploid-specific genes. The polypeptide is Mating-type protein ALPHA2 (HMLALPHA2) (Kluyveromyces lactis (strain ATCC 8585 / CBS 2359 / DSM 70799 / NBRC 1267 / NRRL Y-1140 / WM37) (Yeast)).